The primary structure comprises 105 residues: Iron-sulfur cluster assembly protein CyaY (105 aa).

This sequence belongs to the frataxin family.

Involved in iron-sulfur (Fe-S) cluster assembly. May act as a regulator of Fe-S biogenesis. The protein is Iron-sulfur cluster assembly protein CyaY of Paraburkholderia phymatum (strain DSM 17167 / CIP 108236 / LMG 21445 / STM815) (Burkholderia phymatum).